A 156-amino-acid chain; its full sequence is 6,7-dimethyl-8-ribityllumazine synthase (156 aa).

Residues Phe-23, 57–59 (AYE), and 81–83 (AII) contribute to the 5-amino-6-(D-ribitylamino)uracil site. A (2S)-2-hydroxy-3-oxobutyl phosphate-binding site is contributed by 86–87 (GT). His-89 functions as the Proton donor in the catalytic mechanism. Residue Phe-114 coordinates 5-amino-6-(D-ribitylamino)uracil. Residue Arg-128 participates in (2S)-2-hydroxy-3-oxobutyl phosphate binding.

The protein belongs to the DMRL synthase family.

The enzyme catalyses (2S)-2-hydroxy-3-oxobutyl phosphate + 5-amino-6-(D-ribitylamino)uracil = 6,7-dimethyl-8-(1-D-ribityl)lumazine + phosphate + 2 H2O + H(+). It participates in cofactor biosynthesis; riboflavin biosynthesis; riboflavin from 2-hydroxy-3-oxobutyl phosphate and 5-amino-6-(D-ribitylamino)uracil: step 1/2. In terms of biological role, catalyzes the formation of 6,7-dimethyl-8-ribityllumazine by condensation of 5-amino-6-(D-ribitylamino)uracil with 3,4-dihydroxy-2-butanone 4-phosphate. This is the penultimate step in the biosynthesis of riboflavin. This is 6,7-dimethyl-8-ribityllumazine synthase from Helicobacter pylori (strain J99 / ATCC 700824) (Campylobacter pylori J99).